A 218-amino-acid chain; its full sequence is Akirin (218 aa).

The interval 96–150 is disordered; sequence KAIPRSNDFDDDGDQRGDGCSSNYSKAYRAPSSPKSGSDSEGEAPSTSVTDRSSA. Residues 128–147 show a composition bias toward polar residues; the sequence is SPKSGSDSEGEAPSTSVTDR.

Belongs to the akirin family. As to quaternary structure, interacts with hda-1, a component of the NuRD complex. Interacts with let-418, a component of the NuRD and MEC complexes. Interacts with the transcription factor ceh-18. Interacts with ima-2. As to expression, localizes to somatic tissues throughout the body, including muscle cells. Expressed in lateral epithelial seam cells, the hyp7 epidermal syncytium, and multiple head and tail neurons.

The protein localises to the nucleus. Its function is as follows. Molecular adapter that acts as a bridge between a variety of multiprotein complexes, and which is involved in antifungal innate immunity, development of the muscle and sister chromatid cohesion. Plays a role in antifungal innate immunity by acting as a bridge between components of the NuRD (Nucleosome Remodeling and Deacetylase) and MEC chromatin remodeling complexes. NuRD and MEC complexes bind to the promoters of antimicrobial peptide genes and may recruit other proteins such as ceh-18 to control gene expression in response to fungal infection. During meiotic prophase I, plays a role in the disassembly of synaptonemal complex proteins and in the regulation of chromosome condensation and segregation. Together with nuclear import receptor ima-2, required for the import and load of cohesin complex proteins in meiotic nuclei, possibly by acting as a bridge between ima-2 and cohesins. Required for embryonic development of muscle tissue. This is Akirin from Caenorhabditis elegans.